An 809-amino-acid chain; its full sequence is Transitional endoplasmic reticulum ATPase homolog 1 (809 aa).

Residues 1–21 (MASVPTHQSEKEKKNDELSTA) form a disordered region. Residues 8 to 21 (QSEKEKKNDELSTA) show a composition bias toward basic and acidic residues. ATP-binding positions include 253 to 259 (PGTGKTL), asparagine 354, histidine 390, and 527 to 532 (GCGKTL). The segment at 779 to 809 (FGNNFKFPGEQRGSDAPSAPVPAQDDDDLYN) is disordered. Residues 803–809 (DDDDLYN) are interaction with ufd-2.

It belongs to the AAA ATPase family. CDC48 subfamily. As to quaternary structure, homohexamer; oligomerization is ATP-independent. Forms a ring-shaped particle of 18.3 nm diameter, that displays 6-fold radial symmetry. Interacts with cdc-48.2 and thus may form heterohexamers. Forms a complex composed of cdc-48.1, him-6 and crp-1; within the complex, interacts with helicase him-6 and GTPase crp-1. Forms a complex composed of deubiquitinating enzyme atx-3, adapter ubxn-5 and cdc-48.1; within the complex, interacts (via N-terminus) with ubxn-5 and with atx-3. Forms a complex composed of deubiquitinating enzyme atx-3, E4 ubiquitin-protein ligase ufd-2 and cdc-48.1; within the complex, interacts with atx-3 and (via DDDLYN motif) with ufd-2. Interacts (via N-terminus) with atx-3 (via RRDR motif); the interaction is not required for atx-3 enzymatic activity. Forms a complex composed of cdc-48.1, myosin chaperone unc-45, ubiquitin-protein ligases ufd-2 and chn-1; within the complex, interacts (via DDDLYN motif) with ufd-2 and targets myosin chaperone unc-45 for proteasomal degradation. Forms a complex composed of ubxn-3, ufd-1, npl-4.1 and cdc-48.1; within the complex, interacts (via N-terminus) with ubxn-3 (via FPK motif) and with ufd-1. Forms a complex composed of ubxn-3, cdc-48.1 and/or cdc-48.2 and substrate cdt-1. Interacts (via N-terminus) with ubxn-1. Interacts (via N-terminus) with ubxn-2. Interacts (via N-terminus) with ubxn-4. Interacts with ubxn-6. Interacts with ufd-3. Does not interact with air-2. In terms of tissue distribution, expressed in germ cells and spermatheca. Expressed in body wall muscles.

It is found in the cytoplasm. It localises to the perinuclear region. The enzyme catalyses ATP + H2O = ADP + phosphate + H(+). The first ATP-binding region has low ATPase activity. The second ATP-binding region is responsible for ATPase activity. ATP binding to the first ATP-binding region induces intrinsic activity of the second ATP-binding region. While ATP binding to the first ATP-binding region appears to prevent ATP hydrolysis by the second ATP-binding region, ADP-binding to first region promotes the coordinate and cooperative ATPase cycle of the second ATP-binding region. ATP binding to the first ATP-binding region induces a conformational change, promoting the rotation of the first ATP-binding region relative to the second ATP-binding region in the hexamer. Inhibited by N-ethylmaleimide (NEM). Functionally, ATP-dependent chaperone which probably uses the energy provided by ATP hydrolysis to generate mechanical force to unfold substrate proteins, disassemble protein complexes, and disaggregate protein aggregates. Can also prevent aggregation of unfolded proteins also in an ATP-independent manner. Targets polyubiquitinated proteins for proteasomal degradation by binding to 'Lys-48'-linked polyubiquitin chains. Involved in the cytoplasmic elimination of misfolded proteins exported from the ER. This pathway, known as ERAD, prevents the activation of the unfolded protein response (UPR) caused by the accumulation of misfolded proteins in the ER. In association with helicase him-6 and GTPase crp-1, regulates the unfolded protein response (UPR) following ER stress, probably independently of the ERAD pathway. Together with udf-2 and chn-1, regulates myosin assembly in body wall muscles by targeting myosin chaperone unc-45 for proteasomal degradation. Together with the ufd-1-npl-4 complex, controls the switch from spermatogenesis to oogenesis by regulating E3 ligase cul-2 complex-mediated tra-1 proteasomal degradation. During oocyte meiosis and together with cdc-48.2, required for chromosome condensation at the diakinesis phase in prophase I and for progression of metaphase I. During the first embryonic cell division, regulates DNA replication and thus chromosome segregation and decondensation, and nuclear envelope re-assembly. In S phase and in association with ufd-1, npl-4.1 and/or npl-4.2 and ubxn-3, ensures the degradation of DNA licensing factor cdt-1 after the initiation of DNA replication and thus the disassembly of the DNA replication CMG helicase complex by promoting the dissociation from chromatin of several of its components including cdc-45 and sld-5. Regulates ubxn-3 nuclear localization during S phase. During the first embryonic cell divisions and together with cdc-48.2, regulates the re-assembly of the nuclear envelope after mitosis possibly by inactivating kinase air-2, a component of the chromosomal passenger complex (CPC). However, in another study, cdc-48.1 does not appear to be implicated in the regulation of air-2. In Caenorhabditis elegans, this protein is Transitional endoplasmic reticulum ATPase homolog 1.